The primary structure comprises 270 residues: MSDQQQLPVYKIALGIEYDGSKYYGWQRQNEVRSVQEKLEKALSQVANEPITVFCAGRTDAGVHGTGQVVHFETTAQRKDAAWTLGVNANLPGDIAVRWVKAVPDDFHARFSATARRYRYIIYNHRLRPAVLSKGVTHFYEPLDAERMHRAAQCLLGENDFTSFRAVQCQSRTPWRNVMHINVTRHGPYVVVDIKANAFVHHMVRNIVGSLMEVGAHNQPERWIAELLAAKDRTLAAATAKAEGLYLVAVDYPDRYDLPKPPMGPLFLAD.

Aspartate 60 serves as the catalytic Nucleophile. The RNA binding stretch occupies residues 107 to 111 (FHARF). Tyrosine 118 provides a ligand contact to substrate. The segment at 168–172 (QCQSR) is interaction with tRNA.

This sequence belongs to the tRNA pseudouridine synthase TruA family. In terms of assembly, homodimer.

It catalyses the reaction uridine(38/39/40) in tRNA = pseudouridine(38/39/40) in tRNA. In terms of biological role, formation of pseudouridine at positions 38, 39 and 40 in the anticodon stem and loop of transfer RNAs. The sequence is that of tRNA pseudouridine synthase A from Shigella sonnei (strain Ss046).